The primary structure comprises 322 residues: MQTRNTFSWTWIREEITRSISVSLMIYIITWSSISNAYPIFAQQNYENPREATGRIVCANCHLANKPVDIEVPQAVLPDTVFEAVVKIPYDMQLKQVLANGKKGALNVGAVLILPEGFELAPPDRISPEMKEKIGNLSFQNYRPNKKNILVIGPVPGQKYSEITFPILAPDPATNKDVHFLKYPIYVGGNRGRGQIYPDGSKSNNTVYNATAGGIISKILRKEKGGYEITIADASNGRQVIDIIPRGLELLVSEGESIKLDQPLTSNPNVGGFGQGDAEIVLQDPLRVQGLLFFLGSVVLAQIFLVLKKKQFEKVQLSEMNF.

The signal sequence occupies residues 1 to 35 (MQTRNTFSWTWIREEITRSISVSLMIYIITWSSIS). Residues tyrosine 38, cysteine 58, cysteine 61, and histidine 62 each contribute to the heme site. The helical transmembrane segment at 288-308 (VQGLLFFLGSVVLAQIFLVLK) threads the bilayer.

This sequence belongs to the cytochrome f family. As to quaternary structure, the 4 large subunits of the cytochrome b6-f complex are cytochrome b6, subunit IV (17 kDa polypeptide, petD), cytochrome f and the Rieske protein, while the 4 small subunits are PetG, PetL, PetM and PetN. The complex functions as a dimer. Heme is required as a cofactor.

It localises to the plastid. The protein resides in the chloroplast thylakoid membrane. Component of the cytochrome b6-f complex, which mediates electron transfer between photosystem II (PSII) and photosystem I (PSI), cyclic electron flow around PSI, and state transitions. The protein is Cytochrome f of Aethionema cordifolium (Lebanon stonecress).